The sequence spans 420 residues: Histidine--tRNA ligase (420 aa).

The protein belongs to the class-II aminoacyl-tRNA synthetase family. As to quaternary structure, homodimer.

The protein resides in the cytoplasm. It carries out the reaction tRNA(His) + L-histidine + ATP = L-histidyl-tRNA(His) + AMP + diphosphate + H(+). This Anaplasma phagocytophilum (strain HZ) protein is Histidine--tRNA ligase.